The primary structure comprises 688 residues: MPRKFPLEKTRNIGIMAHIDAGKTTTTERILFHTGKIHKIGETHDGDSQMDWMKQEQERGITITSAATTAFWKEHRINIIDTPGHVDFTVEVSRSLRVLDGAVAVIDAKAGVEPQTETVWRQATEYKVPRIIFVNKMDKIGASFDYAVKTLYQRLGINASPIQLPIGSENEFKGIVDLLEMTGVEFLGTSDEKFKTIEIPEYMKEFAQNKRIELIEKWHNYDEELMMDYLNGKEITVEKLKNVIRQATLKADFFPVLCGSAFKNKGVKKILDAIIDYLPSPMDVSSIVGCNFENKEIIRKTSDNEPFTALAFKVMTDPYVGKLTFFRVYAGTIKTGSYVTNATKQVKERLGRLLQMHANSREEIKEVYAGDIVAAVGLKNTTPGDTLTSINDDIILESMNFPEPVIEIAIEPKTKADQDKIGIALSKLSEEHPTFKIYTNRETAQTIIAAMGELHLEIILDRLKTEFKVEANVNQPQVAYRETLTKISTTEGKFIRQSGGRGQYGHVIIRFEPNSDKGNEFINKIVGGVIPKEYIPAVKKGLEESLSNGILAGFPLIDVKATLIDGSYHDVDSSEIAFKIAASMALKQTKNEGNLVILEPIMEVEIITPNDYIGNVIGDLTSRRGKLENQDSRENTVIIKALVPLSEMFGYATILRSNTQGRASFIMQFLKYERAPKNIAEEIIKKRN.

The tr-type G domain maps to 8–282 (EKTRNIGIMA…AIIDYLPSPM (275 aa)). Residues 17-24 (AHIDAGKT), 81-85 (DTPGH), and 135-138 (NKMD) contribute to the GTP site.

It belongs to the TRAFAC class translation factor GTPase superfamily. Classic translation factor GTPase family. EF-G/EF-2 subfamily.

The protein localises to the cytoplasm. In terms of biological role, catalyzes the GTP-dependent ribosomal translocation step during translation elongation. During this step, the ribosome changes from the pre-translocational (PRE) to the post-translocational (POST) state as the newly formed A-site-bound peptidyl-tRNA and P-site-bound deacylated tRNA move to the P and E sites, respectively. Catalyzes the coordinated movement of the two tRNA molecules, the mRNA and conformational changes in the ribosome. The sequence is that of Elongation factor G (fusA) from Apple proliferation phytoplasma.